The chain runs to 339 residues: Phosphate acyltransferase (339 aa).

It belongs to the PlsX family. Homodimer. Probably interacts with PlsY.

The protein localises to the cytoplasm. The catalysed reaction is a fatty acyl-[ACP] + phosphate = an acyl phosphate + holo-[ACP]. It functions in the pathway lipid metabolism; phospholipid metabolism. Functionally, catalyzes the reversible formation of acyl-phosphate (acyl-PO(4)) from acyl-[acyl-carrier-protein] (acyl-ACP). This enzyme utilizes acyl-ACP as fatty acyl donor, but not acyl-CoA. In Methylococcus capsulatus (strain ATCC 33009 / NCIMB 11132 / Bath), this protein is Phosphate acyltransferase.